The primary structure comprises 242 residues: DNA repair protein RecO (242 aa).

Belongs to the RecO family.

Its function is as follows. Involved in DNA repair and RecF pathway recombination. The polypeptide is DNA repair protein RecO (Laribacter hongkongensis (strain HLHK9)).